A 214-amino-acid polypeptide reads, in one-letter code: Large ribosomal subunit protein uL3 (214 aa).

The disordered stretch occupies residues 133 to 153; the sequence is GRATHGNSRSHNVPGSIGMAQ. An N5-methylglutamine modification is found at glutamine 153.

Belongs to the universal ribosomal protein uL3 family. In terms of assembly, part of the 50S ribosomal subunit. Forms a cluster with proteins L14 and L19. Post-translationally, methylated by PrmB.

Its function is as follows. One of the primary rRNA binding proteins, it binds directly near the 3'-end of the 23S rRNA, where it nucleates assembly of the 50S subunit. This chain is Large ribosomal subunit protein uL3, found in Cupriavidus metallidurans (strain ATCC 43123 / DSM 2839 / NBRC 102507 / CH34) (Ralstonia metallidurans).